A 194-amino-acid polypeptide reads, in one-letter code: Ras-related protein Rab-22A (194 aa).

A GTP-binding site is contributed by 12 to 20 (GDTGVGKSS). An Effector region motif is present at residues 34 to 42 (INPTIGASF). Residues 60-64 (DTAGQ), 118-121 (NKCD), and 148-150 (SAK) contribute to the GTP site. Residues 170–194 (DANPASGGKGFKLRRQPSEPKRSCC) form a disordered region. Over residues 185–194 (QPSEPKRSCC) the composition is skewed to basic and acidic residues. Residues Cys193 and Cys194 are each lipidated (S-geranylgeranyl cysteine).

This sequence belongs to the small GTPase superfamily. Rab family. As to quaternary structure, binds EEA1. Interacts (in its GTP-bound form) with RINL. Interacts directly with ZFYVE20. Interacts (in its GTP-bound form) with RABGEF1. Detected in brain and heart, and at lower levels in lung and spleen.

It is found in the endosome membrane. Its subcellular location is the cell membrane. The protein localises to the early endosome. The protein resides in the late endosome. It localises to the cell projection. It is found in the ruffle. Its subcellular location is the cytoplasmic vesicle. The protein localises to the phagosome. The protein resides in the phagosome membrane. In terms of biological role, plays a role in endocytosis and intracellular protein transport. Mediates trafficking of TF from early endosomes to recycling endosomes. Required for NGF-mediated endocytosis of NTRK1, and subsequent neurite outgrowth. Binds GTP and GDP and has low GTPase activity. Alternates between a GTP-bound active form and a GDP-bound inactive form. In Mus musculus (Mouse), this protein is Ras-related protein Rab-22A (Rab22a).